Here is an 878-residue protein sequence, read N- to C-terminus: MGYPFRALEKKWQAYWRDKRVFCVSEDERFPPERRAYVLDMFPYPSAQGLHVGHPEGYTATDIYCRYLRMGGYNVLHPMGFDAFGLPAENFALKTGTHPRVSTSANCDTFRRQIQSFGFSYDWEREISTADPEYYRWTQWLFLKLYEKGLAYEATAPINWCPSCKTGLANEEVRDACCERCGAEVTRRGVRQWMVRITAYAERLLSDLDELDWPESVKQMQRNWIGKSCGAEIDFPVDAPACSVHDKLPQTIRVYTTRADTLFGVTYLVLAPEHEAVTALTTHAQRAAVQAYVQRAAKKNDLERTDLAKEKTGVFTGAYVRNPINDMRIPVWVGDYVLVSYGTGAVMAVPAHDQRDWDFATRFGLPKLTVVSADYTATVPNSNSPQGAVLQRCVSDEGFVVNSGAFNGLASADARERIVAHLEMRGAGARRVTYRLRDWVFSRQRYWGEPIPLVHCPSCGVVPLPESALPLLLPETADFTPTEDGQGPLARARTWLRVPCPQCASDAVRETNTMPQWAGSCWYYLRYMDPRNKTAFCAPEKERYWAPVALYVGGAEHAVLHLLYARFWHKVLYDLGLVSTKEPFARLVNQGMITSYAYRRKNGALVPHDEVHTNAQGTYVHARTGEKLECVVAKMSKALKNVVNPDDMIAAYGADACRVYEMFMGPLEASKPWNTQGLVGVFRFLEKIWVLAGRVAAANGIPQDSRAEPPGDLHAQKKSCSMYALETLLHRTIQKVTDDTSALSFNTAISQMMIFVNEATRVARRMPLPSKMWEMFVKILSPYAPHLAEELWEMCGHTHTIAYEPWPQVDPARVAPHVCSVVVQVNGKVRDTFSVAPNAPNEELEQKARETAGARKFLGTQQPKRVVIVPNKLVNFVL.

Positions 43–54 (PYPSAQGLHVGH) match the 'HIGH' region motif. The 'KMSKS' region signature appears at 634–638 (KMSKA). K637 lines the ATP pocket.

It belongs to the class-I aminoacyl-tRNA synthetase family.

The protein resides in the cytoplasm. The catalysed reaction is tRNA(Leu) + L-leucine + ATP = L-leucyl-tRNA(Leu) + AMP + diphosphate. The polypeptide is Leucine--tRNA ligase (Treponema pallidum subsp. pallidum (strain SS14)).